The chain runs to 259 residues: Imidazole glycerol phosphate synthase subunit HisF (259 aa).

Active-site residues include Asp-11 and Asp-130.

This sequence belongs to the HisA/HisF family. Heterodimer of HisH and HisF.

The protein localises to the cytoplasm. The enzyme catalyses 5-[(5-phospho-1-deoxy-D-ribulos-1-ylimino)methylamino]-1-(5-phospho-beta-D-ribosyl)imidazole-4-carboxamide + L-glutamine = D-erythro-1-(imidazol-4-yl)glycerol 3-phosphate + 5-amino-1-(5-phospho-beta-D-ribosyl)imidazole-4-carboxamide + L-glutamate + H(+). It participates in amino-acid biosynthesis; L-histidine biosynthesis; L-histidine from 5-phospho-alpha-D-ribose 1-diphosphate: step 5/9. Its function is as follows. IGPS catalyzes the conversion of PRFAR and glutamine to IGP, AICAR and glutamate. The HisF subunit catalyzes the cyclization activity that produces IGP and AICAR from PRFAR using the ammonia provided by the HisH subunit. This Acidovorax ebreus (strain TPSY) (Diaphorobacter sp. (strain TPSY)) protein is Imidazole glycerol phosphate synthase subunit HisF.